Consider the following 203-residue polypeptide: Holliday junction branch migration complex subunit RuvA (203 aa).

The segment at 1 to 64 (MIGRLRGIII…EDAQLLYGFN (64 aa)) is domain I. The tract at residues 65–142 (NKQERTLFKE…KGLHGDLFTP (78 aa)) is domain II. Positions 143–154 (AADLVLTSPASP) are flexible linker. The interval 155–203 (ATDDAEQEAVAALVALGYKPQEASRMVSKIARPDTSSETLIREALRAAL) is domain III.

Belongs to the RuvA family. As to quaternary structure, homotetramer. Forms an RuvA(8)-RuvB(12)-Holliday junction (HJ) complex. HJ DNA is sandwiched between 2 RuvA tetramers; dsDNA enters through RuvA and exits via RuvB. An RuvB hexamer assembles on each DNA strand where it exits the tetramer. Each RuvB hexamer is contacted by two RuvA subunits (via domain III) on 2 adjacent RuvB subunits; this complex drives branch migration. In the full resolvosome a probable DNA-RuvA(4)-RuvB(12)-RuvC(2) complex forms which resolves the HJ.

The protein localises to the cytoplasm. The RuvA-RuvB-RuvC complex processes Holliday junction (HJ) DNA during genetic recombination and DNA repair, while the RuvA-RuvB complex plays an important role in the rescue of blocked DNA replication forks via replication fork reversal (RFR). RuvA specifically binds to HJ cruciform DNA, conferring on it an open structure. The RuvB hexamer acts as an ATP-dependent pump, pulling dsDNA into and through the RuvAB complex. HJ branch migration allows RuvC to scan DNA until it finds its consensus sequence, where it cleaves and resolves the cruciform DNA. The polypeptide is Holliday junction branch migration complex subunit RuvA (Shigella flexneri serotype 5b (strain 8401)).